Reading from the N-terminus, the 111-residue chain is DNA-binding protein MTH_1615 (111 aa).

The protein belongs to the PDCD5 family.

Its function is as follows. DNA-binding protein which can interact with a randomly chosen 20-mer of double-stranded DNA. This is DNA-binding protein MTH_1615 from Methanothermobacter thermautotrophicus (strain ATCC 29096 / DSM 1053 / JCM 10044 / NBRC 100330 / Delta H) (Methanobacterium thermoautotrophicum).